Here is a 587-residue protein sequence, read N- to C-terminus: Bifunctional lycopene cyclase/phytoene synthase (587 aa).

The tract at residues 1 to 242 is lycopene beta-cyclase; the sequence is MGYDYALVHV…IVFGIAAFDK (242 aa). 7 helical membrane passes run 8–28, 35–55, 77–97, 120–140, 150–170, 172–192, and 220–240; these read VHVKYTIPLAALLTVFSYPVF, RTLFIVTIAFVATIPWDSYLI, AEELFFFIIQTYITAQLYIIL, GKLVGQLALSGSVLLGTWLIA, LILVWACTFALFTWTITAHFL, ALPLACTALPILLPTVYLWIV, and IEEATFFLVTNMLIVFGIAAF. The segment at 249 to 587 is phytoene synthase; sequence AFPEKFDKPA…WVAWSTLMAA (339 aa).

It in the N-terminal section; belongs to the lycopene beta-cyclase family. The protein in the C-terminal section; belongs to the phytoene/squalene synthase family.

It localises to the membrane. It carries out the reaction all-trans-lycopene = gamma-carotene. It catalyses the reaction gamma-carotene = all-trans-beta-carotene. The enzyme catalyses 2 (2E,6E,10E)-geranylgeranyl diphosphate = 15-cis-phytoene + 2 diphosphate. Its pathway is carotenoid biosynthesis; beta-carotene biosynthesis. It functions in the pathway carotenoid biosynthesis; phytoene biosynthesis; all-trans-phytoene from geranylgeranyl diphosphate: step 1/1. Functionally, bifunctional enzyme that catalyzes the reactions from geranylgeranyl diphosphate to phytoene (phytoene synthase) and lycopene to beta-carotene via the intermediate gamma-carotene (lycopene cyclase). In Colletotrichum graminicola (strain M1.001 / M2 / FGSC 10212) (Maize anthracnose fungus), this protein is Bifunctional lycopene cyclase/phytoene synthase.